The sequence spans 152 residues: CMT1A duplicated region transcript 4 protein (152 aa).

The span at 1 to 11 shows a compositional bias: basic and acidic residues; the sequence is MDARRMKKEEG. Disordered stretches follow at residues 1 to 23 and 60 to 89; these read MDAR…RKLL and ERPW…GKAV. Over residues 65–74 the composition is skewed to polar residues; that stretch reads SRQNKPSSVI.

In terms of tissue distribution, expressed in fetal skeletal muscle and kidney.

The sequence is that of CMT1A duplicated region transcript 4 protein (CDRT4) from Homo sapiens (Human).